The sequence spans 487 residues: Solute carrier family 22 member 15-like (487 aa).

The chain crosses the membrane as a helical span at residues phenylalanine 23 to alanine 43. Asparagine 70 carries N-linked (GlcNAc...) asparagine glycosylation. 11 helical membrane-spanning segments follow: residues leucine 90–serine 110, proline 117–proline 137, valine 141–phenylalanine 161, serine 178–isoleucine 198, threonine 203–proline 223, isoleucine 286–alanine 306, leucine 315–isoleucine 335, alanine 345–glutamate 365, threonine 374–tyrosine 394, leucine 408–methionine 428, and methionine 435–proline 455.

It belongs to the major facilitator (TC 2.A.1) superfamily. Organic cation transporter (TC 2.A.1.19) family.

It localises to the membrane. Probably transports organic cations. This chain is Solute carrier family 22 member 15-like (slc22a15b), found in Xenopus laevis (African clawed frog).